The chain runs to 214 residues: Mediator of RNA polymerase II transcription subunit 29 (214 aa).

A disordered region spans residues 1–78; the sequence is MMNQMGMHMQ…QQQSQQTEKV (78 aa). Residues 15–34 are compositionally biased toward gly residues; sequence VPGGPGGPVGMAGGPVGGVG. Low complexity predominate over residues 44–74; the sequence is QMQQQQQVAAQQQQQQQQQQQAQAHQQQSQQ.

Belongs to the Mediator complex subunit 29 family. In terms of assembly, component of the Mediator complex.

The protein resides in the nucleus. Its function is as follows. Component of the Mediator complex, a coactivator involved in the regulated transcription of nearly all RNA polymerase II-dependent genes. Mediator functions as a bridge to convey information from gene-specific regulatory proteins to the basal RNA polymerase II transcription machinery. Mediator is recruited to promoters by direct interactions with regulatory proteins and serves as a scaffold for the assembly of a functional preinitiation complex with RNA polymerase II and the general transcription factors. In Aedes aegypti (Yellowfever mosquito), this protein is Mediator of RNA polymerase II transcription subunit 29 (ix).